A 348-amino-acid polypeptide reads, in one-letter code: Casein kinase II subunit alpha (348 aa).

One can recognise a Protein kinase domain in the interval 55-340 (YEIVRKIGRG…PLEAMEHPFF (286 aa)). Residues 61 to 69 (IGRGKFSEV) and Lys84 contribute to the ATP site. Asp172 functions as the Proton acceptor in the catalytic mechanism.

This sequence belongs to the protein kinase superfamily. Ser/Thr protein kinase family. CK2 subfamily. As to quaternary structure, tetramer of two alpha and two beta chains.

It is found in the cytoplasm. The catalysed reaction is L-seryl-[protein] + ATP = O-phospho-L-seryl-[protein] + ADP + H(+). It carries out the reaction L-threonyl-[protein] + ATP = O-phospho-L-threonyl-[protein] + ADP + H(+). Casein kinases are operationally defined by their preferential utilization of acidic proteins such as caseins as substrates. The alpha chain contains the catalytic site. The protein is Casein kinase II subunit alpha of Theileria annulata.